Reading from the N-terminus, the 117-residue chain is Immunoglobulin heavy variable 4-4 (117 aa).

The N-terminal stretch at 1–19 (MKHLWFFLLLVAAPRWVLS) is a signal peptide. Positions 20-44 (QVQLQESGPGLVKPSGTLSLTCAVS) are framework-1. The 98-residue stretch at 20 to 117 (QVQLQESGPG…ADTAVYYCAR (98 aa)) folds into the Ig-like domain. Cys-41 and Cys-115 are oxidised to a cystine. Positions 45 to 53 (GGSISSSNW) are complementarity-determining-1. Residues 54–70 (WSWVRQPPGKGLEWIGE) form a framework-2 region. Residues 71-77 (IYHSGST) form a complementarity-determining-2 region. Residues 78–115 (NYNPSLKSRVTISVDKSKNQFSLKLSSVTAADTAVYYC) form a framework-3 region. Positions 116–117 (AR) are complementarity-determining-3.

Immunoglobulins are composed of two identical heavy chains and two identical light chains; disulfide-linked.

Its subcellular location is the secreted. It is found in the cell membrane. Functionally, v region of the variable domain of immunoglobulin heavy chains that participates in the antigen recognition. Immunoglobulins, also known as antibodies, are membrane-bound or secreted glycoproteins produced by B lymphocytes. In the recognition phase of humoral immunity, the membrane-bound immunoglobulins serve as receptors which, upon binding of a specific antigen, trigger the clonal expansion and differentiation of B lymphocytes into immunoglobulins-secreting plasma cells. Secreted immunoglobulins mediate the effector phase of humoral immunity, which results in the elimination of bound antigens. The antigen binding site is formed by the variable domain of one heavy chain, together with that of its associated light chain. Thus, each immunoglobulin has two antigen binding sites with remarkable affinity for a particular antigen. The variable domains are assembled by a process called V-(D)-J rearrangement and can then be subjected to somatic hypermutations which, after exposure to antigen and selection, allow affinity maturation for a particular antigen. This Homo sapiens (Human) protein is Immunoglobulin heavy variable 4-4.